Consider the following 112-residue polypeptide: Nucleoid-associated protein CA_C0126 (112 aa).

Residues glutamate 93 to lysine 102 show a composition bias toward basic and acidic residues. The tract at residues glutamate 93 to leucine 112 is disordered.

Belongs to the YbaB/EbfC family. Homodimer.

Its subcellular location is the cytoplasm. The protein localises to the nucleoid. Functionally, binds to DNA and alters its conformation. May be involved in regulation of gene expression, nucleoid organization and DNA protection. The polypeptide is Nucleoid-associated protein CA_C0126 (Clostridium acetobutylicum (strain ATCC 824 / DSM 792 / JCM 1419 / IAM 19013 / LMG 5710 / NBRC 13948 / NRRL B-527 / VKM B-1787 / 2291 / W)).